The sequence spans 349 residues: Acyl-CoA Delta(11) desaturase (349 aa).

Transmembrane regions (helical) follow at residues 41–61 and 66–86; these read FLTFSYAHLAALYGLYLCFTS and TLLFSFVLFHMSNIGITAGAH. Residues 86–91 carry the Histidine box-1 motif; the sequence is HRLWTH. The Histidine box-2 motif lies at 123–127; that stretch reads HRLHH. A helical transmembrane segment spans residues 184–204; sequence AVPLIGTVCFALPTLIPVYCW. Positions 263–267 match the Histidine box-3 motif; the sequence is HNYHH. Residues 282 to 302 traverse the membrane as a helical segment; sequence FLNLTTLFIDFCAWFGWAYDL.

Belongs to the fatty acid desaturase type 1 family. Requires Fe cation as cofactor. Adult female pheromone gland. Increases by two or three orders of magnitude during the first 2 days after adult eclosion.

The protein localises to the endoplasmic reticulum membrane. It catalyses the reaction an 11,12-saturated fatty acyl-CoA + 2 Fe(II)-[cytochrome b5] + O2 + 2 H(+) = an (11Z)-Delta(11)-fatty acyl-CoA + 2 Fe(III)-[cytochrome b5] + 2 H2O. Catalyzes the formation of Delta(11) fatty acyl precursors in the pheromone gland. This Trichoplusia ni (Cabbage looper) protein is Acyl-CoA Delta(11) desaturase (D11DS).